Here is a 627-residue protein sequence, read N- to C-terminus: (R)-linalool synthase, chloroplastic (627 aa).

The N-terminal 21 residues, 1-21 (MAFVSIAPLASRCCVHKSFVS), are a transit peptide targeting the chloroplast. Residues D378, D382, and E530 each contribute to the Mg(2+) site. Positions 378-382 (DDIYD) match the DDXXD motif motif.

The protein belongs to the terpene synthase family. Tpsd subfamily. Mg(2+) is required as a cofactor. It depends on Mn(2+) as a cofactor.

Its subcellular location is the plastid. The protein resides in the chloroplast. The enzyme catalyses (2E)-geranyl diphosphate + H2O = (R)-linalool + diphosphate. The protein operates within terpene metabolism; oleoresin biosynthesis. Its function is as follows. Terpene synthase (TPS) involved in the biosynthesis of monoterpene natural products included in conifer oleoresin secretions and volatile emissions; these compounds contribute to biotic and abiotic stress defense against herbivores and pathogens. Catalyzes the conversion of (2E)-geranyl diphosphate (GPP) to (R)-linalool. This is (R)-linalool synthase, chloroplastic from Picea glauca (White spruce).